The following is a 331-amino-acid chain: (+)-aristolochene synthase TS1 (331 aa).

The segment at 1–22 (MTRMKNSSSNVTSASGSGSGSG) is disordered. Low complexity predominate over residues 7-16 (SSSNVTSASG). 4 residues coordinate Mg(2+): D102, N231, S235, and E239. The DDxx(x)D/E motif signature appears at 102-106 (DDLLE). Positions 231–239 (NDVYSYEKE) match the NDxxSxxxD/E motif motif. (2E,6E)-farnesyl diphosphate-binding residues include R326 and Y327.

It belongs to the terpene synthase family. As to quaternary structure, homodimer. Requires Mg(2+) as cofactor.

It carries out the reaction (2E,6E)-farnesyl diphosphate = (+)-aristolochene + diphosphate. Its pathway is sesquiterpene biosynthesis; aristolochene biosynthesis; aristolochene from farnesyl diphosphate: step 1/1. Catalyzes the cyclization of trans,trans-farnesyl diphosphate (FPP) to the bicyclic sesquiterpene aristolochene. Aristolochene is the likely parent compound for a number of sesquiterpenoid toxins produced by filamentous fungi. The polypeptide is (+)-aristolochene synthase TS1 (Penicillium expansum (Blue mold rot fungus)).